A 149-amino-acid chain; its full sequence is MKRFLLATCLVAALLWEAGAAPAHQVPVKTKGKHVFPEQETEKVWDTRALEPLEKDNQLGPLLPEPKQKPAAAEEKRPDAMTWVETEDILSHLRSPLQGPELDLDSIDHPMSDDVQDEEVPQSRPILYRQVLQGPEEDLDHLAHSMEDS.

A signal peptide spans 1–20 (MKRFLLATCLVAALLWEAGA). 2 disordered regions span residues 51–79 (EPLE…KRPD) and 97–122 (LQGP…EVPQ). Residues 66 to 79 (PKQKPAAAEEKRPD) are compositionally biased toward basic and acidic residues.

As to quaternary structure, interacts with MTTP. Interacts with MAD1L1. As to expression, predominantly expressed in the intestinal epithelial cells than in the liver (at protein level). Abundantly expressed in the uterus during late pregnancy by uterus epithelial cells. After birth expression rapidly decreases and is no longer found in the uterus by the third day. Also highly expressed in the small intestine where it shows a proximal-distal graded expression.

The protein resides in the secreted. It localises to the endoplasmic reticulum. Lipid-binding protein which promotes lipid absorption by facilitating MTTP-mediated lipid transfer (mainly triglycerides and phospholipids) and MTTP-mediated apoB lipoprotein assembly and secretion. Protects the gastrointestinal epithelium from irradiation-induced apoptosis. May play an important role in maintaining normal growth homeostasis in epithelial cells. Involved in p53/TP53-dependent cell survival after DNA damage. This is Proline-rich acidic protein 1 (Prap1) from Mus musculus (Mouse).